The primary structure comprises 575 residues: Sulfite reductase [NADPH] hemoprotein beta-component (575 aa).

[4Fe-4S] cluster contacts are provided by cysteine 440, cysteine 446, cysteine 485, and cysteine 489. Cysteine 489 contacts siroheme.

Belongs to the nitrite and sulfite reductase 4Fe-4S domain family. Alpha(8)-beta(8). The alpha component is a flavoprotein, the beta component is a hemoprotein. It depends on siroheme as a cofactor. Requires [4Fe-4S] cluster as cofactor.

It carries out the reaction hydrogen sulfide + 3 NADP(+) + 3 H2O = sulfite + 3 NADPH + 4 H(+). Its pathway is sulfur metabolism; hydrogen sulfide biosynthesis; hydrogen sulfide from sulfite (NADPH route): step 1/1. Its function is as follows. Component of the sulfite reductase complex that catalyzes the 6-electron reduction of sulfite to sulfide. This is one of several activities required for the biosynthesis of L-cysteine from sulfate. This chain is Sulfite reductase [NADPH] hemoprotein beta-component, found in Chromohalobacter salexigens (strain ATCC BAA-138 / DSM 3043 / CIP 106854 / NCIMB 13768 / 1H11).